The primary structure comprises 285 residues: Pantothenate synthetase (285 aa).

30–37 (MGNLHDGH) contacts ATP. H37 (proton donor) is an active-site residue. Position 61 (Q61) interacts with (R)-pantoate. Q61 is a beta-alanine binding site. 149-152 (GEKD) is an ATP binding site. Q155 lines the (R)-pantoate pocket. Residues I178 and 186 to 189 (LSSR) contribute to the ATP site.

This sequence belongs to the pantothenate synthetase family. As to quaternary structure, homodimer.

It localises to the cytoplasm. The enzyme catalyses (R)-pantoate + beta-alanine + ATP = (R)-pantothenate + AMP + diphosphate + H(+). It functions in the pathway cofactor biosynthesis; (R)-pantothenate biosynthesis; (R)-pantothenate from (R)-pantoate and beta-alanine: step 1/1. Functionally, catalyzes the condensation of pantoate with beta-alanine in an ATP-dependent reaction via a pantoyl-adenylate intermediate. The chain is Pantothenate synthetase from Buchnera aphidicola subsp. Acyrthosiphon pisum (strain 5A).